The following is a 351-amino-acid chain: Aromatic amino acid aminotransferase (351 aa).

At Lys215 the chain carries N6-(pyridoxal phosphate)lysine.

It belongs to the class-II pyridoxal-phosphate-dependent aminotransferase family. In terms of assembly, homodimer. The cofactor is pyridoxal 5'-phosphate.

The enzyme catalyses an aromatic L-alpha-amino acid + 2-oxoglutarate = an aromatic oxo-acid + L-glutamate. Aminotransferase that catalyzes the conversion of aromatic amino acids and 2-oxoglutarate into corresponding aromatic oxo acids and L-glutamate. The protein is Aromatic amino acid aminotransferase of Mycolicibacterium vanbaalenii (strain DSM 7251 / JCM 13017 / BCRC 16820 / KCTC 9966 / NRRL B-24157 / PYR-1) (Mycobacterium vanbaalenii).